We begin with the raw amino-acid sequence, 472 residues long: ATP-dependent rRNA helicase rrp3 (472 aa).

The interval 1 to 52 (MRDVKKRKIAHEAPEHGSDTESTSSHKSVAQQDDPLETQDEATATESRPAPK) is disordered. Over residues 10–19 (AHEAPEHGSD) the composition is skewed to basic and acidic residues. The span at 20 to 31 (TESTSSHKSVAQ) shows a compositional bias: polar residues. A Q motif motif is present at residues 52 to 80 (KSFKDLGIIDQLCEACETMGYKAPTPIQA). The Helicase ATP-binding domain occupies 83-254 (IPLALQGRDL…RASLSNPLRV (172 aa)). 96-103 (AETGSGKT) contributes to the ATP binding site. A DEAD box motif is present at residues 202-205 (DEAD). Residues 282 to 426 (YLVYLLNEFV…EYELEKDEVM (145 aa)) enclose the Helicase C-terminal domain. A disordered region spans residues 444–472 (KNFDEKRGTKAKKFGKGKRSRDEMDQEEG). The segment covering 452–462 (TKAKKFGKGKR) has biased composition (basic residues).

The protein belongs to the DEAD box helicase family. DDX47/RRP3 subfamily. As to quaternary structure, interacts with the SSU processome.

It localises to the nucleus. It carries out the reaction ATP + H2O = ADP + phosphate + H(+). Functionally, ATP-dependent rRNA helicase required for pre-ribosomal RNA processing. Involved in the maturation of the 35S-pre-rRNA and to its cleavage to mature 18S rRNA. The chain is ATP-dependent rRNA helicase rrp3 from Aspergillus fumigatus (strain ATCC MYA-4609 / CBS 101355 / FGSC A1100 / Af293) (Neosartorya fumigata).